Here is a 603-residue protein sequence, read N- to C-terminus: Adenine deaminase (603 aa).

It belongs to the metallo-dependent hydrolases superfamily. Adenine deaminase family. Mn(2+) is required as a cofactor.

It carries out the reaction adenine + H2O + H(+) = hypoxanthine + NH4(+). The sequence is that of Adenine deaminase from Ruegeria pomeroyi (strain ATCC 700808 / DSM 15171 / DSS-3) (Silicibacter pomeroyi).